A 339-amino-acid chain; its full sequence is Ketol-acid reductoisomerase (NADP(+)) (339 aa).

The region spanning 1–182 is the KARI N-terminal Rossmann domain; that stretch reads MRVYYDRDAD…GGGRAGIIET (182 aa). NADP(+)-binding positions include 24-27, arginine 48, serine 51, serine 53, and 83-86; these read YGSQ and DELQ. Histidine 108 is a catalytic residue. Position 134 (glycine 134) interacts with NADP(+). The KARI C-terminal knotted domain maps to 183 to 328; the sequence is TFKEECETDL…ERLRGMMPWI (146 aa). Residues aspartate 191, glutamate 195, glutamate 227, and glutamate 231 each coordinate Mg(2+). Serine 252 is a substrate binding site.

Belongs to the ketol-acid reductoisomerase family. Mg(2+) serves as cofactor.

The enzyme catalyses (2R)-2,3-dihydroxy-3-methylbutanoate + NADP(+) = (2S)-2-acetolactate + NADPH + H(+). It carries out the reaction (2R,3R)-2,3-dihydroxy-3-methylpentanoate + NADP(+) = (S)-2-ethyl-2-hydroxy-3-oxobutanoate + NADPH + H(+). It participates in amino-acid biosynthesis; L-isoleucine biosynthesis; L-isoleucine from 2-oxobutanoate: step 2/4. The protein operates within amino-acid biosynthesis; L-valine biosynthesis; L-valine from pyruvate: step 2/4. Functionally, involved in the biosynthesis of branched-chain amino acids (BCAA). Catalyzes an alkyl-migration followed by a ketol-acid reduction of (S)-2-acetolactate (S2AL) to yield (R)-2,3-dihydroxy-isovalerate. In the isomerase reaction, S2AL is rearranged via a Mg-dependent methyl migration to produce 3-hydroxy-3-methyl-2-ketobutyrate (HMKB). In the reductase reaction, this 2-ketoacid undergoes a metal-dependent reduction by NADPH to yield (R)-2,3-dihydroxy-isovalerate. This Methylobacterium sp. (strain 4-46) protein is Ketol-acid reductoisomerase (NADP(+)).